Consider the following 501-residue polypeptide: Pentatricopeptide repeat-containing protein At4g16470 (501 aa).

PPR repeat units follow at residues 107–141 (EPETYAVLLQECKQRKEYTKGKRIHAQMFVVGFAL), 142–172 (NEYLKVKLLILYALSGDLQTAGILFRSLKIR), 173–207 (DLIPWNAMISGYVQKGLEQEGLFIYYDMRQNRIVP), 208–242 (DQYTFASVFRACSALDRLEHGKRAHAVMIKRCIKS), 243–273 (NIIVDSALVDMYFKCSSFSDGHRVFDQLSTR), 274–308 (NVITWTSLISGYGYHGKVSEVLKCFEKMKEEGCRP), 309–344 (NPVTFLVVLTACNHGGLVDKGWEHFYSMKRDYGIEP), and 345–379 (EGQHYAAMVDTLGRAGRLQEAYEFVMKSPCKEHPP). The type E motif stretch occupies residues 380–455 (VWGSLLGACR…DPGYSQIELQ (76 aa)). A type E(+) motif region spans residues 456-486 (GEVHRFMKDDTSHRLSEKIYKKVHEMTSFFM).

The protein belongs to the PPR family. PCMP-E subfamily.

This Arabidopsis thaliana (Mouse-ear cress) protein is Pentatricopeptide repeat-containing protein At4g16470 (PCMP-E12).